A 993-amino-acid polypeptide reads, in one-letter code: Ephrin type-B receptor 3 (993 aa).

An N-terminal signal peptide occupies residues 1-29 (MAGARPPPGLLPLLAPLLLPLLLPAGCWA). Residues 30–554 (LEETLMDTKW…AQQLQEQLPL (525 aa)) are Extracellular-facing. The Eph LBD domain occupies 31–209 (EETLMDTKWV…FYKKCASTTA (179 aa)). A disulfide bond links cysteine 73 and cysteine 191. Fibronectin type-III domains are found at residues 331–446 (VPSP…TNQA) and 447–540 (APSE…TTSE). 2 N-linked (GlcNAc...) asparagine glycosylation sites follow: asparagine 343 and asparagine 440. A helical membrane pass occupies residues 555–575 (IVGSTVAGFVFMVVVVVIALV). The Cytoplasmic portion of the chain corresponds to 576-993 (CLRKQRHGPD…QMNQTLPVQV (418 aa)). Tyrosine 609 is subject to Phosphotyrosine; by autocatalysis. Residues 628–891 (VKIEEVIGAG…QIVNTLDKLI (264 aa)) enclose the Protein kinase domain. Residues 634–642 (IGAGEFGEV) and lysine 660 each bind ATP. The Proton acceptor role is filled by aspartate 753. The SAM domain occupies 920–984 (TTFTTVGDWL…LCSIQDMRLQ (65 aa)). A PDZ-binding motif is present at residues 991–993 (VQV).

This sequence belongs to the protein kinase superfamily. Tyr protein kinase family. Ephrin receptor subfamily. In terms of assembly, heterotetramer upon binding of the ligand. The heterotetramer is composed of an ephrin dimer and a receptor dimer. Oligomerization is probably required to induce biological responses. Phosphorylated. Autophosphorylates upon ligand-binding. Autophosphorylation on Tyr-609 is required for interaction with SH2 domain-containing proteins. Post-translationally, ubiquitinated by RNF186, mainly through 'Lys-48' and 'Lys-63'-linked polyubiquitin chains. As to expression, expressed in cells of the retinal ganglion cell layer during retinal axon guidance to the optic disk. Expressed by Paneth and progenitor cells in the crypts of the intestinal epithelium (at protein level). Expressed in myogenic progenitor cells.

Its subcellular location is the cell membrane. The protein localises to the cell projection. It localises to the dendrite. It carries out the reaction L-tyrosyl-[protein] + ATP = O-phospho-L-tyrosyl-[protein] + ADP + H(+). In terms of biological role, receptor tyrosine kinase which binds promiscuously transmembrane ephrin-B family ligands residing on adjacent cells, leading to contact-dependent bidirectional signaling into neighboring cells. The signaling pathway downstream of the receptor is referred to as forward signaling while the signaling pathway downstream of the ephrin ligand is referred to as reverse signaling. Generally has an overlapping and redundant function with EPHB2. Like EPHB2, functions in axon guidance during development regulating for instance the neurons forming the corpus callosum and the anterior commissure, 2 major interhemispheric connections between the temporal lobes of the cerebral cortex. In addition to its role in axon guidance also plays an important redundant role with other ephrin-B receptors in development and maturation of dendritic spines and the formation of excitatory synapses. Controls other aspects of development through regulation of cell migration and positioning. This includes angiogenesis, palate development and thymic epithelium development for instance. Forward and reverse signaling through the EFNB2/EPHB3 complex also regulate migration and adhesion of cells that tubularize the urethra and septate the cloaca. Finally, plays an important role in intestinal epithelium differentiation segregating progenitor from differentiated cells in the crypt. The chain is Ephrin type-B receptor 3 (Ephb3) from Mus musculus (Mouse).